A 106-amino-acid chain; its full sequence is Glutaredoxin-1 (106 aa).

At A1 the chain carries N-acetylalanine. A Glutaredoxin domain is found at 2–105; the sequence is QEFVNSKIQP…ARLKEMGALR (104 aa). An N6-succinyllysine modification is found at K8. Disulfide bonds link C22–C25 and C78–C82.

Belongs to the glutaredoxin family.

The protein localises to the cytoplasm. Functionally, has a glutathione-disulfide oxidoreductase activity in the presence of NADPH and glutathione reductase. Reduces low molecular weight disulfides and proteins. The polypeptide is Glutaredoxin-1 (GLRX) (Oryctolagus cuniculus (Rabbit)).